A 953-amino-acid chain; its full sequence is 26S proteasome non-ATPase regulatory subunit 1 (953 aa).

At methionine 1 the chain carries N-acetylmethionine. The residue at position 273 (threonine 273) is a Phosphothreonine. A disordered region spans residues 279–318 (PGSTNTGTVPGSEKDSDSMETEEKTSSAFVGKTPEASPEP). A Phosphoserine modification is found at serine 290. Over residues 290 to 303 (SEKDSDSMETEEKT) the composition is skewed to basic and acidic residues. Lysine 310 bears the N6-acetyllysine mark. Threonine 311 is modified (phosphothreonine). Serine 315 is subject to Phosphoserine. PC repeat units lie at residues 403–436 (TATA…PGSA), 441–474 (GGLY…DIVR), 476–510 (GGSL…VTGE), 511–545 (AAGL…EKIL), 547–580 (GLAV…ILRR), 581–616 (SGMY…DVRR), 617–649 (AAVE…PHVR), 651–685 (GAAM…YVRQ), 686–726 (GALI…DVMA), and 729–761 (GAIL…PSVV). Lysine 720 is subject to N6-acetyllysine. Phosphothreonine is present on threonine 830. The residue at position 834 (serine 834) is a Phosphoserine. Disordered regions lie at residues 839-881 (AKKK…LDNP) and 930-953 (AHGP…YIDD). 2 stretches are compositionally biased toward basic and acidic residues: residues 842–852 (KEKEKEKKEEE) and 859–872 (AEKK…KEPE). Residues 936 to 953 (EEEEQEPEPPEPFEYIDD) show a composition bias toward acidic residues.

It belongs to the proteasome subunit S1 family. As to quaternary structure, component of the 19S proteasome regulatory particle complex. The 26S proteasome consists of a 20S core particle (CP) and two 19S regulatory subunits (RP). The regulatory particle is made of a lid composed of 9 subunits, a base containing 6 ATPases and few additional components including PSMD1. Interacts with ADRM1. Interacts with ZFAND1.

Its function is as follows. Component of the 26S proteasome, a multiprotein complex involved in the ATP-dependent degradation of ubiquitinated proteins. This complex plays a key role in the maintenance of protein homeostasis by removing misfolded or damaged proteins, which could impair cellular functions, and by removing proteins whose functions are no longer required. Therefore, the proteasome participates in numerous cellular processes, including cell cycle progression, apoptosis, or DNA damage repair. In Homo sapiens (Human), this protein is 26S proteasome non-ATPase regulatory subunit 1 (PSMD1).